A 32-amino-acid chain; its full sequence is Photosystem II reaction center protein T (32 aa).

The chain crosses the membrane as a helical span at residues 3–23 (ALVYVFLLIGTLMIIFFAIFF).

The protein belongs to the PsbT family. PSII is composed of 1 copy each of membrane proteins PsbA, PsbB, PsbC, PsbD, PsbE, PsbF, PsbH, PsbI, PsbJ, PsbK, PsbL, PsbM, PsbT, PsbY, PsbZ, Psb30/Ycf12, at least 3 peripheral proteins of the oxygen-evolving complex and a large number of cofactors. It forms dimeric complexes.

It localises to the plastid. The protein localises to the chloroplast thylakoid membrane. Functionally, found at the monomer-monomer interface of the photosystem II (PS II) dimer, plays a role in assembly and dimerization of PSII. PSII is a light-driven water plastoquinone oxidoreductase, using light energy to abstract electrons from H(2)O, generating a proton gradient subsequently used for ATP formation. This Cyanidioschyzon merolae (strain NIES-3377 / 10D) (Unicellular red alga) protein is Photosystem II reaction center protein T.